We begin with the raw amino-acid sequence, 404 residues long: Probable tRNA sulfurtransferase (404 aa).

The region spanning 60-165 (TAVAESLKQV…EEAAYLSYET (106 aa)) is the THUMP domain. ATP contacts are provided by residues 183 to 184 (ML), 208 to 209 (HF), R265, G287, and Q296.

It belongs to the ThiI family.

Its subcellular location is the cytoplasm. It carries out the reaction [ThiI sulfur-carrier protein]-S-sulfanyl-L-cysteine + a uridine in tRNA + 2 reduced [2Fe-2S]-[ferredoxin] + ATP + H(+) = [ThiI sulfur-carrier protein]-L-cysteine + a 4-thiouridine in tRNA + 2 oxidized [2Fe-2S]-[ferredoxin] + AMP + diphosphate. The enzyme catalyses [ThiS sulfur-carrier protein]-C-terminal Gly-Gly-AMP + S-sulfanyl-L-cysteinyl-[cysteine desulfurase] + AH2 = [ThiS sulfur-carrier protein]-C-terminal-Gly-aminoethanethioate + L-cysteinyl-[cysteine desulfurase] + A + AMP + 2 H(+). It functions in the pathway cofactor biosynthesis; thiamine diphosphate biosynthesis. Catalyzes the ATP-dependent transfer of a sulfur to tRNA to produce 4-thiouridine in position 8 of tRNAs, which functions as a near-UV photosensor. Also catalyzes the transfer of sulfur to the sulfur carrier protein ThiS, forming ThiS-thiocarboxylate. This is a step in the synthesis of thiazole, in the thiamine biosynthesis pathway. The sulfur is donated as persulfide by IscS. This Streptococcus pneumoniae serotype 19F (strain G54) protein is Probable tRNA sulfurtransferase.